The following is a 465-amino-acid chain: Cysteine--tRNA ligase (465 aa).

Cysteine 29 contacts Zn(2+). The 'HIGH' region motif lies at proline 31 to asparagine 41. The Zn(2+) site is built by cysteine 209, histidine 234, and glutamate 238. The 'KMSKS' region motif lies at lysine 266–serine 270. Residue lysine 269 coordinates ATP. At serine 270 the chain carries Phosphoserine.

Belongs to the class-I aminoacyl-tRNA synthetase family. In terms of assembly, monomer. Zn(2+) serves as cofactor.

It localises to the cytoplasm. The catalysed reaction is tRNA(Cys) + L-cysteine + ATP = L-cysteinyl-tRNA(Cys) + AMP + diphosphate. The sequence is that of Cysteine--tRNA ligase from Bacillus thuringiensis (strain Al Hakam).